A 40-amino-acid chain; its full sequence is MITDVQLAIFSNVLGVFLFLLVVAYHYINANTGKPSAKAK.

Residues 1–4 lie on the Lumenal side of the membrane; sequence MITD. Residues 5 to 25 form a helical membrane-spanning segment; sequence VQLAIFSNVLGVFLFLLVVAY. Over 26–40 the chain is Cytoplasmic; that stretch reads HYINANTGKPSAKAK.

This sequence belongs to the OST4 family. As to quaternary structure, component of the oligosaccharyltransferase (OST) complex.

It localises to the endoplasmic reticulum membrane. Functionally, subunit of the oligosaccharyl transferase (OST) complex that catalyzes the initial transfer of a defined glycan (Glc(3)Man(9)GlcNAc(2) in eukaryotes) from the lipid carrier dolichol-pyrophosphate to an asparagine residue within an Asn-X-Ser/Thr consensus motif in nascent polypeptide chains, the first step in protein N-glycosylation. N-glycosylation occurs cotranslationally and the complex associates with the Sec61 complex at the channel-forming translocon complex that mediates protein translocation across the endoplasmic reticulum (ER). All subunits are required for a maximal enzyme activity. The sequence is that of Dolichyl-diphosphooligosaccharide--protein glycosyltransferase subunit 4 from Drosophila erecta (Fruit fly).